We begin with the raw amino-acid sequence, 205 residues long: tRNA (guanine-N(7)-)-methyltransferase (205 aa).

Residues Glu36, Glu61, Asp88, and Asp109 each contribute to the S-adenosyl-L-methionine site. The active site involves Asp109. A substrate-binding site is contributed by Lys113. The interval 115 to 120 (RHEKRR) is interaction with RNA. Substrate is bound by residues Asp145 and 183–186 (TGYE).

It belongs to the class I-like SAM-binding methyltransferase superfamily. TrmB family.

It carries out the reaction guanosine(46) in tRNA + S-adenosyl-L-methionine = N(7)-methylguanosine(46) in tRNA + S-adenosyl-L-homocysteine. The protein operates within tRNA modification; N(7)-methylguanine-tRNA biosynthesis. Functionally, catalyzes the formation of N(7)-methylguanine at position 46 (m7G46) in tRNA. The chain is tRNA (guanine-N(7)-)-methyltransferase from Mycoplasmopsis agalactiae (strain NCTC 10123 / CIP 59.7 / PG2) (Mycoplasma agalactiae).